Reading from the N-terminus, the 1136-residue chain is DNA-directed RNA polymerase I subunit RPA2 (1136 aa).

The interval 1-24 (MDPGSRWRNLPSGPSLKHLTDPSY) is disordered. R180 contributes to the RNA binding site. The segment at 194–208 (VRPKWKTRGPGYTHY) is loop B. Positions 236–247 (LNFIYRKELFFL) are loop A. RNA is bound at residue D367. Fork loop stretches follow at residues 439 to 453 (LRSK…DSGL) and 474 to 489 (RGAD…VRRL). Position 890 (K890) interacts with RNA. The DNA site is built by R1020 and R1036. A Phosphoserine modification is found at S1051. 4 residues coordinate Zn(2+): C1071, C1074, C1099, and C1102. Residues 1071-1102 (CVKCGSLLSPLLEKPPPSWSAMRNRKYNCTLC) form a C4-type zinc finger.

Belongs to the RNA polymerase beta chain family. As to quaternary structure, component of the RNA polymerase I (Pol I) complex consisting of 13 subunits: a ten-subunit catalytic core composed of POLR1A/RPA1, POLR1B/RPA2, POLR1C/RPAC1, POLR1D/RPAC2, POLR1H/RPA12, POLR2E/RPABC1, POLR2F/RPABC2, POLR2H/RPABC3, POLR2K/RPABC4 and POLR2L/RPABC5; a mobile stalk subunit POLR1F/RPA43 protruding from the core and additional subunits homologous to general transcription factors POLR1E/RPA49 and POLR1G/RPA34. Part of Pol I pre-initiation complex (PIC), in which Pol I core assembles with RRN3 and promoter-bound UTBF and SL1/TIF-IB complex.

It localises to the nucleus. Its subcellular location is the nucleolus. It is found in the chromosome. The enzyme catalyses RNA(n) + a ribonucleoside 5'-triphosphate = RNA(n+1) + diphosphate. Catalytic core component of RNA polymerase I (Pol I), a DNA-dependent RNA polymerase which synthesizes ribosomal RNA precursors using the four ribonucleoside triphosphates as substrates. Transcribes 47S pre-rRNAs from multicopy rRNA gene clusters, giving rise to 5.8S, 18S and 28S ribosomal RNAs. Pol I-mediated transcription cycle proceeds through transcription initiation, transcription elongation and transcription termination stages. During transcription initiation, Pol I pre-initiation complex (PIC) is recruited by the selectivity factor 1 (SL1/TIF-IB) complex bound to the core promoter that precedes an rDNA repeat unit. The PIC assembly bends the promoter favoring the formation of the transcription bubble and promoter escape. Once the polymerase has escaped from the promoter it enters the elongation phase during which RNA is actively polymerized, based on complementarity with the template DNA strand. Highly processive, assembles in structures referred to as 'Miller trees' where many elongating Pol I complexes queue and transcribe the same rDNA coding regions. At terminator sequences downstream of the rDNA gene, PTRF interacts with Pol I and halts Pol I transcription leading to the release of the RNA transcript and polymerase from the DNA. Forms Pol I active center together with the largest subunit POLR1A/RPA1. Appends one nucleotide at a time to the 3' end of the nascent RNA, with POLR1A/RPA1 contributing a Mg(2+)-coordinating DxDGD motif, and POLR1B/RPA2 providing lysine residues believed to facilitate Watson-Crick base pairing between the incoming nucleotide and the template base. Typically, Mg(2+) ions direct a 5' nucleoside triphosphate to form a phosphodiester bond with the 3' hydroxyl of the preceding nucleotide of the nascent RNA, with the elimination of pyrophosphate. Has proofreading activity: Pauses and backtracks to allow the cleavage of a missincorporated nucleotide via POLR1H/RPA12. High Pol I processivity is associated with decreased transcription fidelity. This is DNA-directed RNA polymerase I subunit RPA2 (POLR1B) from Pongo abelii (Sumatran orangutan).